The sequence spans 156 residues: Small ribosomal subunit protein uS7 (156 aa).

This sequence belongs to the universal ribosomal protein uS7 family. Part of the 30S ribosomal subunit. Contacts proteins S9 and S11.

Functionally, one of the primary rRNA binding proteins, it binds directly to 16S rRNA where it nucleates assembly of the head domain of the 30S subunit. Is located at the subunit interface close to the decoding center, probably blocks exit of the E-site tRNA. The chain is Small ribosomal subunit protein uS7 from Leuconostoc mesenteroides subsp. mesenteroides (strain ATCC 8293 / DSM 20343 / BCRC 11652 / CCM 1803 / JCM 6124 / NCDO 523 / NBRC 100496 / NCIMB 8023 / NCTC 12954 / NRRL B-1118 / 37Y).